The chain runs to 181 residues: Der GTPase-activating protein YihI (181 aa).

Disordered regions lie at residues 1 to 75 and 145 to 181; these read MSRK…KKIP and EPEA…DYKG. Residues 32–43 are compositionally biased toward basic residues; it reads RLRKKDKKRKGL. Over residues 146 to 155 the composition is skewed to acidic residues; it reads PEAEEEFEEE. Over residues 156–165 the composition is skewed to basic and acidic residues; that stretch reads APVRKSRSDD. Over residues 166-181 the composition is skewed to acidic residues; that stretch reads DLLADFEDFDMDDYKG.

It belongs to the YihI family. As to quaternary structure, interacts with Der.

In terms of biological role, a GTPase-activating protein (GAP) that modifies Der/EngA GTPase function. May play a role in ribosome biogenesis. The polypeptide is Der GTPase-activating protein YihI (Vibrio vulnificus (strain CMCP6)).